The primary structure comprises 239 residues: Putative 3-methyladenine DNA glycosylase (239 aa).

This sequence belongs to the DNA glycosylase MPG family.

This is Putative 3-methyladenine DNA glycosylase from Pseudomonas aeruginosa (strain LESB58).